The chain runs to 394 residues: uncharacterized protein (394 aa).

Helical transmembrane passes span 22-42 (VLVS…VLLH), 60-80 (LALF…LLLF), 81-101 (GFTG…APVA), 231-251 (LHLA…YLWL), 271-291 (GFCA…QLAP), 303-323 (LFLV…GDWP), 328-348 (LLGV…APWL), and 355-375 (ALGP…HAWM).

It is found in the cell membrane. This is an uncharacterized protein from Pseudomonas aeruginosa (strain ATCC 15692 / DSM 22644 / CIP 104116 / JCM 14847 / LMG 12228 / 1C / PRS 101 / PAO1).